The sequence spans 118 residues: Transcription factor PAR1 (118 aa).

The segment at 1-58 (MEETLATPDATRRSLSPSCSATVKSRAAGFERRTKRRLSETNASVREDREEAEEEEDE) is disordered. A compositionally biased stretch (polar residues) spans 13–23 (RSLSPSCSATV). Residues 43–92 (ASVREDREEAEEEEDEVKEKIEALQRIIPGGAALGVDALFEETAGYILSL) enclose the bHLH domain.

The protein belongs to the bHLH protein family. As to quaternary structure, homodimer.

The protein resides in the nucleus. In terms of biological role, atypical bHLH transcription factor that acts as a negative regulator of a variety of shade avoidance syndrome (SAS) responses, including seedling elongation and photosynthetic pigment accumulation. Acts as a direct transcriptional repressor of two auxin-responsive genes, SAUR15 and SAUR68. May function in integrating shade and hormone transcriptional networks in response to light and auxin changes. This chain is Transcription factor PAR1 (PAR1), found in Arabidopsis thaliana (Mouse-ear cress).